We begin with the raw amino-acid sequence, 166 residues long: Ribosomal RNA large subunit methyltransferase H (166 aa).

Residues Leu-85, Gly-116, and 135–140 (ISKMTF) each bind S-adenosyl-L-methionine.

It belongs to the RNA methyltransferase RlmH family. As to quaternary structure, homodimer.

The protein localises to the cytoplasm. The enzyme catalyses pseudouridine(1915) in 23S rRNA + S-adenosyl-L-methionine = N(3)-methylpseudouridine(1915) in 23S rRNA + S-adenosyl-L-homocysteine + H(+). Its function is as follows. Specifically methylates the pseudouridine at position 1915 (m3Psi1915) in 23S rRNA. The polypeptide is Ribosomal RNA large subunit methyltransferase H (Francisella tularensis subsp. holarctica (strain FTNF002-00 / FTA)).